The following is a 306-amino-acid chain: tRNA pseudouridine synthase B (306 aa).

Aspartate 43 acts as the Nucleophile in catalysis.

It belongs to the pseudouridine synthase TruB family. Type 1 subfamily.

It carries out the reaction uridine(55) in tRNA = pseudouridine(55) in tRNA. Its function is as follows. Responsible for synthesis of pseudouridine from uracil-55 in the psi GC loop of transfer RNAs. In Heliobacterium modesticaldum (strain ATCC 51547 / Ice1), this protein is tRNA pseudouridine synthase B.